The following is a 30-amino-acid chain: Elongation factor 1-delta (30 aa).

The protein belongs to the EF-1-beta/EF-1-delta family. EF-1 is composed of 4 subunits: alpha, beta (1B-alpha=beta'), delta (1B-beta), and gamma (1B-gamma).

Functionally, EF-1-beta and EF-1-delta stimulate the exchange of GDP bound to EF-1-alpha to GTP. The polypeptide is Elongation factor 1-delta (Populus euphratica (Euphrates poplar)).